Consider the following 579-residue polypeptide: Probable N-acetylgalactosaminyltransferase 9 (579 aa).

Over 1-12 (MLRYIIPRKKGT) the chain is Cytoplasmic. The helical; Signal-anchor for type II membrane protein transmembrane segment at 13–30 (FVIAAFLTVAFFCIVAYH) threads the bilayer. The Lumenal segment spans residues 31-579 (RNDRRRTKFQ…KWNFIDPAKA (549 aa)). N-linked (GlcNAc...) asparagine glycosylation occurs at Asn67. 5 cysteine pairs are disulfide-bonded: Cys123-Cys356, Cys347-Cys427, Cys464-Cys483, Cys507-Cys520, and Cys545-Cys562. The segment at 133 to 243 (LPKTSVIIIF…HGWLEPIVQR (111 aa)) is catalytic subdomain A. Positions 174 and 204 each coordinate substrate. A Mn(2+)-binding site is contributed by Asp227. Residue Ser228 coordinates substrate. His229 is a Mn(2+) binding site. Residues 302–364 (YIRSPTMAGG…PCSHVGHIFR (63 aa)) form a catalytic subdomain B region. Substrate is bound at residue Trp333. Residue His361 coordinates Mn(2+). Substrate contacts are provided by Arg364, His367, and Tyr369. An N-linked (GlcNAc...) asparagine glycan is attached at Asn370. The Ricin B-type lectin domain occupies 450 to 574 (AYGALHTVVS…KDEHQKWNFI (125 aa)).

It belongs to the glycosyltransferase 2 family. GalNAc-T subfamily. It depends on Mn(2+) as a cofactor.

The protein localises to the golgi apparatus membrane. It functions in the pathway protein modification; protein glycosylation. In terms of biological role, probable glycopeptide transferase involved in O-linked oligosaccharide biosynthesis. Glycopeptide transferases catalyze the transfer of an N-acetyl-D-galactosamine residue to an already glycosylated peptide. In contrast to other members of the family, it does not act as a peptide transferase that transfers GalNAc onto serine or threonine residue on peptides that have been tested. Some peptide transferase activity is however not excluded, considering that its appropriate peptide substrate may remain unidentified. The protein is Probable N-acetylgalactosaminyltransferase 9 (gly-9) of Caenorhabditis elegans.